The primary structure comprises 1229 residues: ABC transporter B family member 22 (1229 aa).

A run of 6 helical transmembrane segments spans residues 22–42 (MGLGLIGAVGDGFITPIIFFI), 69–89 (VALLYVAGASLVICFVEGYCW), 145–167 (LPNFLMSASAFVASYIVGFIMLW), 171–193 (IVGFPFFILLLIPGLMCGRALIN), 251–271 (GIAIGSNGVTYAIWGFMTWYG), and 274–294 (MVMYHGAKGGTIFAVIICITY). Residues 22-311 (MGLGLIGAVG…GLSNLKYFSE (290 aa)) form the ABC transmembrane type-1 1 domain. The region spanning 346 to 582 (VQFKHVKFMY…VDGQYTSLVR (237 aa)) is the ABC transporter 1 domain. 381–388 (GGSGSGKS) provides a ligand contact to ATP. 2 N-linked (GlcNAc...) asparagine glycosylation sites follow: Asn529 and Asn594. 2 helical membrane passes run 661 to 681 (ALYGCLSAVLYGALHPIYAYA) and 703 to 723 (IYVLLFVGLAVLCFLISIIQQ). Residues 661–949 (ALYGCLSAVL…AGAMTMDLAK (289 aa)) enclose the ABC transmembrane type-1 2 domain. An N-linked (GlcNAc...) asparagine glycan is attached at Asn758. 4 consecutive transmembrane segments (helical) span residues 782–800 (VSLLVQTISAVSVACTLGL), 807–823 (SIVMIAIQPVVVGCFYT), 885–908 (WLAGIVLATSRSLMTCTSALNYWY), and 923–943 (FFELFILFVSTGRVIADAGAM). The ABC transporter 2 domain maps to 984 to 1222 (IKFVNVDFAY…GPTGVYFSLV (239 aa)). Asn1004 is a glycosylation site (N-linked (GlcNAc...) asparagine). 1019–1026 (GPSGSGKS) serves as a coordination point for ATP. The N-linked (GlcNAc...) asparagine glycan is linked to Asn1157.

Belongs to the ABC transporter superfamily. ABCB family. Multidrug resistance exporter (TC 3.A.1.201) subfamily.

It localises to the membrane. This Arabidopsis thaliana (Mouse-ear cress) protein is ABC transporter B family member 22 (ABCB22).